A 435-amino-acid chain; its full sequence is BAHD acyltransferase BIA1 (435 aa).

Catalysis depends on proton acceptor residues H151 and D369.

This sequence belongs to the plant acyltransferase family. As to expression, mostly expressed in roots (particularly in the root elongation zone), and, to a lower extent, in seedling, leaves (especially in hydathodes), siliques (e.g. in developing seeds) and flowers.

The protein localises to the cytoplasm. Monitors brassinosteroids (BR) responses and homeostasis, particularly in the root and hypocotyl in darkness. Promotes flavonoid biosynthesis. In Arabidopsis thaliana (Mouse-ear cress), this protein is BAHD acyltransferase BIA1.